The chain runs to 70 residues: Large ribosomal subunit protein uL29 (70 aa).

This sequence belongs to the universal ribosomal protein uL29 family.

This chain is Large ribosomal subunit protein uL29, found in Gloeobacter violaceus (strain ATCC 29082 / PCC 7421).